A 222-amino-acid chain; its full sequence is Probable transaldolase (222 aa).

Residue lysine 91 is the Schiff-base intermediate with substrate of the active site.

It belongs to the transaldolase family. Type 3B subfamily.

It localises to the cytoplasm. It carries out the reaction D-sedoheptulose 7-phosphate + D-glyceraldehyde 3-phosphate = D-erythrose 4-phosphate + beta-D-fructose 6-phosphate. Its pathway is carbohydrate degradation; pentose phosphate pathway; D-glyceraldehyde 3-phosphate and beta-D-fructose 6-phosphate from D-ribose 5-phosphate and D-xylulose 5-phosphate (non-oxidative stage): step 2/3. In terms of biological role, transaldolase is important for the balance of metabolites in the pentose-phosphate pathway. The polypeptide is Probable transaldolase (Chlorobium phaeovibrioides (strain DSM 265 / 1930) (Prosthecochloris vibrioformis (strain DSM 265))).